A 391-amino-acid chain; its full sequence is G-patch domain-containing protein 1 (391 aa).

In terms of domain architecture, G-patch spans 15-61 (KDSAAFKLMKSMGWEEGEGLGKDKQGIKGYVRVTNKQDTSGVGLDKP). Disordered regions lie at residues 80 to 132 (VQAA…EKGK) and 212 to 307 (KASE…PAKR). Acidic residues-rich tracts occupy residues 92–102 (DDSDKEDESED) and 265–295 (NSDDDDDDDDDDDEEDEEEDEDESEADDDDK). Residues 305 to 312 (AKRKHDEI) carry the Nuclear localization signal motif.

In terms of tissue distribution, strongly expressed in tissues with high cell proliferation activity that have a high demand for ribosome production such as shoot tips, leaves primordia, root tips and floral buds.

The protein localises to the nucleus. The protein resides in the nucleolus. Involved in ribosome biogenesis, required for normal progression of rRNA processing. Seems to promote cell proliferation in leaves. This chain is G-patch domain-containing protein 1, found in Arabidopsis thaliana (Mouse-ear cress).